Reading from the N-terminus, the 162-residue chain is Protein mmf1, mitochondrial (162 aa).

The protein belongs to the RutC family.

It is found in the mitochondrion. The protein localises to the cytoplasm. Functionally, plays a role in the maintenance of mitochondrial DNA. The protein is Protein mmf1, mitochondrial (mmf1) of Schizosaccharomyces pombe (strain 972 / ATCC 24843) (Fission yeast).